The chain runs to 179 residues: Large ribosomal subunit protein uL16m (179 aa).

It belongs to the universal ribosomal protein uL16 family. Component of the mitochondrial ribosome large subunit.

The protein resides in the mitochondrion. The protein is Large ribosomal subunit protein uL16m (RPL16) of Arabidopsis thaliana (Mouse-ear cress).